Consider the following 297-residue polypeptide: HTH-type transcriptional regulator ArgP (297 aa).

Positions 4-60 (PDYRTLQALDAVIRERGFERAAQKLCITQSAVSQRIKQLENMFGQPLLVRTVPPRPT) constitute an HTH lysR-type domain. A DNA-binding region (H-T-H motif) is located at residues 21-40 (FERAAQKLCITQSAVSQRIK).

It belongs to the LysR transcriptional regulatory family. As to quaternary structure, homodimer.

Its function is as follows. Controls the transcription of genes involved in arginine and lysine metabolism. The sequence is that of HTH-type transcriptional regulator ArgP from Klebsiella pneumoniae subsp. pneumoniae (strain ATCC 700721 / MGH 78578).